Reading from the N-terminus, the 684-residue chain is SLVVAAAAASPYSGSHDFSGFQRDEPDGVPTAQKQHDINFLLHKLYEPLHEANLKALEDSFDPLTHTANMPDAGVAVNKLMQEVKTQHLEERHHWFSVFNATQREEALLLVKVLLQCQDWPTAIGNAVYFRKMMNEETYVYALYTAIKHSPLTKHVVLPPLYEIMPHFFTSSEVIQQAYRAKMIGQPGKFNMNFTGTQNNPEHKIAYFGEDIGLSTHYINWHIEYPFWWNETFGYQIERRGENYFWVHHQLVNRFEAERISNHLQKIEKLHWERNLHEGFDPHTSYKNGEHFPFRHDDIHIEDVDKVAEVRDMIVMENRIRDAIAHGYVIDKEGNKVDINNEHGIDILGEIIESCVYNPYNEYYGSLHNMGHMMLGHQGDPHAKYYDTPSVLEHYETTLRDPAFYKLHKYIDDLFRKHKDHLKPYSRKELLFPGIAINNIHIDGPLETYFEDYEYSLMNAMDDKEEMKWEDNMEISAIIPRLRHKDFSFKVNIMNNNDENKLATIRIFAWPHRDVNGVIMPFNEGRWHAIELDKFWKYLAPGENEVTRKCDESSVTVPDVPSLKSLHEQAEAAIAGISELNLEEFVSATGLPNRLLIPKGNAAGVEFKLVVAVTDGEADSVNDEINLTTKFHHYGHHGVYLDKKSHGYPLDRRVPDERLFHEIPNFGETIVKVFNHNEHVHRHE.

The signal sequence occupies residues 1 to 23; it reads SLVVAAAAASPYSGSHDFSGFQR. Residues 7 to 32 form a disordered region; it reads AAASPYSGSHDFSGFQRDEPDGVPTA. 4 N-linked (GlcNAc...) asparagine glycosylation sites follow: N100, N193, N230, and N626.

Belongs to the tyrosinase family. Hemocyanin subfamily. Hexamer. As to expression, strongly expressed in ovaries. Also expressed in heart. Not detected in hepatopancreas, gills, connective tissue or muscle.

Its function is as follows. Does not function as a hemocyanin. This chain is Pseudohemocyanin-1, found in Homarus americanus (American lobster).